Reading from the N-terminus, the 252-residue chain is Chitooligosaccharide deacetylase (252 aa).

Mg(2+) contacts are provided by His-61 and His-125.

The protein belongs to the YdjC deacetylase family. ChbG subfamily. As to quaternary structure, homodimer. Requires Mg(2+) as cofactor.

The protein resides in the cytoplasm. It carries out the reaction N,N'-diacetylchitobiose + H2O = N-acetyl-beta-D-glucosaminyl-(1-&gt;4)-D-glucosamine + acetate. The enzyme catalyses diacetylchitobiose-6'-phosphate + H2O = N'-monoacetylchitobiose-6'-phosphate + acetate. The protein operates within glycan degradation; chitin degradation. Its function is as follows. Involved in the degradation of chitin. ChbG is essential for growth on the acetylated chitooligosaccharides chitobiose and chitotriose but is dispensable for growth on cellobiose and chitosan dimer, the deacetylated form of chitobiose. Deacetylation of chitobiose-6-P and chitotriose-6-P is necessary for both the activation of the chb promoter by the regulatory protein ChbR and the hydrolysis of phosphorylated beta-glucosides by the phospho-beta-glucosidase ChbF. Catalyzes the removal of only one acetyl group from chitobiose-6-P to yield monoacetylchitobiose-6-P, the inducer of ChbR and the substrate of ChbF. This Citrobacter koseri (strain ATCC BAA-895 / CDC 4225-83 / SGSC4696) protein is Chitooligosaccharide deacetylase.